The sequence spans 198 residues: Recombination protein RecR (198 aa).

The segment at 57-72 (CSVCGNLTDEDPCAIC) adopts a C4-type zinc-finger fold. The region spanning 80–175 (STILIVEDSR…KVTRLARGLA (96 aa)) is the Toprim domain.

Belongs to the RecR family.

May play a role in DNA repair. It seems to be involved in an RecBC-independent recombinational process of DNA repair. It may act with RecF and RecO. In Streptococcus sanguinis (strain SK36), this protein is Recombination protein RecR.